The primary structure comprises 974 residues: Cell division control protein 15 (974 aa).

The Protein kinase domain maps to 25-272; the sequence is YHLKQVIGRG…ADQLLKHVWI (248 aa). ATP contacts are provided by residues 31-39 and lysine 54; that span reads IGRGSYGVV. The active-site Proton acceptor is the aspartate 146. The interval 360–702 is self association domain; the sequence is CSLENIADTI…ITAICVEMSL (343 aa). Low complexity predominate over residues 554 to 563; the sequence is SSSLPLSSSP. The interval 554–592 is disordered; the sequence is SSSLPLSSSPTRNSPVNSVQSPSRSPVHSLMATRPSSPM. 2 positions are modified to phosphoserine: serine 561 and serine 567. A compositionally biased stretch (polar residues) spans 564–579; sequence TRNSPVNSVQSPSRSP. The tract at residues 751 to 974 is auto-inhibitory domain; the sequence is TVGSSESHSV…FSVPITTFQT (224 aa). A Phosphothreonine modification is found at threonine 870. The segment at 941 to 974 is disordered; the sequence is AAIGSSPTKDERSNLRSSKDKSDGFSVPITTFQT. The segment covering 948–963 has biased composition (basic and acidic residues); that stretch reads TKDERSNLRSSKDKSD.

It belongs to the protein kinase superfamily. Ser/Thr protein kinase family. In terms of assembly, homodimer. Interacts with TEM1. In terms of processing, phosphorylation by CDK1 reduces the binding to the mother spindle pole body. The extent of phosphorylation gradually increases during cell-cycle progression until some point during late anaphase/telophase when it is rapidly dephosphorylated by CDC14. Phosphorylation inhibits kinase activity and dephosphorylation by CDC14 activates CDC15.

It localises to the cytoplasm. It is found in the cytoskeleton. The protein resides in the spindle pole. The protein localises to the bud neck. It carries out the reaction L-seryl-[protein] + ATP = O-phospho-L-seryl-[protein] + ADP + H(+). The catalysed reaction is L-threonyl-[protein] + ATP = O-phospho-L-threonyl-[protein] + ADP + H(+). Its activity is regulated as follows. Kinase activity is inhibited by phosphorylation and activated by dephosphorylation by CDC14. Protein kinase of the mitotic exit network (MEN) essential for late nuclear division in the mitotic cycle. Promotes mitotic exit by phosphorylating DBF2 and directly switching on DBF2 kinase activity. Involved in the localization of DBF2 and DBF20 to the neck which is necessary to undergo cytokinesis. Plays a role in segregation of chromosomes during recovery from spindle checkpoint activation. Required for spindle pole localization of CDK1 and inactivation of CDC2 kinase activity at the end of mitosis. Required for spindle disassembly after meiosis II and plays a role in spore morphogenesis. The polypeptide is Cell division control protein 15 (CDC15) (Saccharomyces cerevisiae (strain ATCC 204508 / S288c) (Baker's yeast)).